Reading from the N-terminus, the 34-residue chain is Photosystem II reaction center protein M (34 aa).

A helical membrane pass occupies residues 5–25 (ILAFSATALLILFPTALLLIL).

It belongs to the PsbM family. In terms of assembly, PSII is composed of 1 copy each of membrane proteins PsbA, PsbB, PsbC, PsbD, PsbE, PsbF, PsbH, PsbI, PsbJ, PsbK, PsbL, PsbM, PsbT, PsbX, PsbY, PsbZ, Psb30/Ycf12, at least 3 peripheral proteins of the oxygen-evolving complex and a large number of cofactors. It forms dimeric complexes.

It localises to the plastid membrane. In terms of biological role, one of the components of the core complex of photosystem II (PSII). PSII is a light-driven water:plastoquinone oxidoreductase that uses light energy to abstract electrons from H(2)O, generating O(2) and a proton gradient subsequently used for ATP formation. It consists of a core antenna complex that captures photons, and an electron transfer chain that converts photonic excitation into a charge separation. This subunit is found at the monomer-monomer interface. The protein is Photosystem II reaction center protein M of Cuscuta gronovii (Common dodder).